The following is a 194-amino-acid chain: Peptidyl-tRNA hydrolase (194 aa).

Residue tyrosine 16 participates in tRNA binding. Residue histidine 21 is the Proton acceptor of the active site. The tRNA site is built by tyrosine 67, asparagine 69, and asparagine 115.

This sequence belongs to the PTH family. Monomer.

The protein localises to the cytoplasm. The catalysed reaction is an N-acyl-L-alpha-aminoacyl-tRNA + H2O = an N-acyl-L-amino acid + a tRNA + H(+). In terms of biological role, hydrolyzes ribosome-free peptidyl-tRNAs (with 1 or more amino acids incorporated), which drop off the ribosome during protein synthesis, or as a result of ribosome stalling. Functionally, catalyzes the release of premature peptidyl moieties from peptidyl-tRNA molecules trapped in stalled 50S ribosomal subunits, and thus maintains levels of free tRNAs and 50S ribosomes. The polypeptide is Peptidyl-tRNA hydrolase (Synechocystis sp. (strain ATCC 27184 / PCC 6803 / Kazusa)).